The primary structure comprises 680 residues: DNA-directed RNA polymerase subunit beta' (680 aa).

Residues cysteine 68, cysteine 70, cysteine 86, and cysteine 89 each coordinate Zn(2+). Mg(2+)-binding residues include aspartate 488, aspartate 490, and aspartate 492.

It belongs to the RNA polymerase beta' chain family. RpoC1 subfamily. In plastids the minimal PEP RNA polymerase catalytic core is composed of four subunits: alpha, beta, beta', and beta''. When a (nuclear-encoded) sigma factor is associated with the core the holoenzyme is formed, which can initiate transcription. It depends on Mg(2+) as a cofactor. Zn(2+) serves as cofactor.

It localises to the plastid. It is found in the chloroplast. It carries out the reaction RNA(n) + a ribonucleoside 5'-triphosphate = RNA(n+1) + diphosphate. DNA-dependent RNA polymerase catalyzes the transcription of DNA into RNA using the four ribonucleoside triphosphates as substrates. The chain is DNA-directed RNA polymerase subunit beta' from Nicotiana tabacum (Common tobacco).